Here is a 357-residue protein sequence, read N- to C-terminus: Probable dual-specificity RNA methyltransferase RlmN (357 aa).

Glutamate 95 functions as the Proton acceptor in the catalytic mechanism. The region spanning 106–340 (NRDRHTVCVS…VSVREEKGTD (235 aa)) is the Radical SAM core domain. Cysteine 113 and cysteine 345 are disulfide-bonded. 3 residues coordinate [4Fe-4S] cluster: cysteine 120, cysteine 124, and cysteine 127. Residues 172–173 (GE), serine 204, 227–229 (SLH), and asparagine 302 contribute to the S-adenosyl-L-methionine site. Residue cysteine 345 is the S-methylcysteine intermediate of the active site.

Belongs to the radical SAM superfamily. RlmN family. It depends on [4Fe-4S] cluster as a cofactor.

It is found in the cytoplasm. It carries out the reaction adenosine(2503) in 23S rRNA + 2 reduced [2Fe-2S]-[ferredoxin] + 2 S-adenosyl-L-methionine = 2-methyladenosine(2503) in 23S rRNA + 5'-deoxyadenosine + L-methionine + 2 oxidized [2Fe-2S]-[ferredoxin] + S-adenosyl-L-homocysteine. The catalysed reaction is adenosine(37) in tRNA + 2 reduced [2Fe-2S]-[ferredoxin] + 2 S-adenosyl-L-methionine = 2-methyladenosine(37) in tRNA + 5'-deoxyadenosine + L-methionine + 2 oxidized [2Fe-2S]-[ferredoxin] + S-adenosyl-L-homocysteine. Functionally, specifically methylates position 2 of adenine 2503 in 23S rRNA and position 2 of adenine 37 in tRNAs. This Desulfitobacterium hafniense (strain Y51) protein is Probable dual-specificity RNA methyltransferase RlmN.